Reading from the N-terminus, the 465-residue chain is Histidine--tRNA ligase (465 aa).

It belongs to the class-II aminoacyl-tRNA synthetase family. As to quaternary structure, homodimer.

It is found in the cytoplasm. The enzyme catalyses tRNA(His) + L-histidine + ATP = L-histidyl-tRNA(His) + AMP + diphosphate + H(+). The polypeptide is Histidine--tRNA ligase (hisS) (Pelagibacter ubique (strain HTCC1062)).